The sequence spans 261 residues: Ribosomal RNA small subunit methyltransferase J (261 aa).

Residues 111 to 112 (RD), 127 to 128 (ER), 163 to 164 (SS), and aspartate 181 contribute to the S-adenosyl-L-methionine site.

Belongs to the methyltransferase superfamily. RsmJ family.

It localises to the cytoplasm. It catalyses the reaction guanosine(1516) in 16S rRNA + S-adenosyl-L-methionine = N(2)-methylguanosine(1516) in 16S rRNA + S-adenosyl-L-homocysteine + H(+). Specifically methylates the guanosine in position 1516 of 16S rRNA. This chain is Ribosomal RNA small subunit methyltransferase J, found in Shewanella sp. (strain ANA-3).